A 590-amino-acid chain; its full sequence is CTP synthase (590 aa).

Positions 1–278 (MRKHPQSATK…DAFVVRRLNL (278 aa)) are amidoligase domain. S20 lines the CTP pocket. S20 provides a ligand contact to UTP. Residues 21-26 (SLGKGL) and D78 contribute to the ATP site. Mg(2+)-binding residues include D78 and E152. CTP is bound by residues 159 to 161 (DIE), 199 to 204 (KTKPTQ), and K235. Residues 199 to 204 (KTKPTQ) and K235 each bind UTP. One can recognise a Glutamine amidotransferase type-1 domain in the interval 303-551 (RIALVGKYVD…VGAAIDYKSA (249 aa)). G366 is a binding site for L-glutamine. C393 functions as the Nucleophile; for glutamine hydrolysis in the catalytic mechanism. L-glutamine-binding positions include 394–397 (LGLQ), E416, and R477. Active-site residues include H524 and E526. A disordered region spans residues 566–590 (EHLPNSSNQHRDGVERSFPAPAARG).

The protein belongs to the CTP synthase family. In terms of assembly, homotetramer.

The enzyme catalyses UTP + L-glutamine + ATP + H2O = CTP + L-glutamate + ADP + phosphate + 2 H(+). It catalyses the reaction L-glutamine + H2O = L-glutamate + NH4(+). The catalysed reaction is UTP + NH4(+) + ATP = CTP + ADP + phosphate + 2 H(+). Its pathway is pyrimidine metabolism; CTP biosynthesis via de novo pathway; CTP from UDP: step 2/2. Its activity is regulated as follows. Allosterically activated by GTP, when glutamine is the substrate; GTP has no effect on the reaction when ammonia is the substrate. The allosteric effector GTP functions by stabilizing the protein conformation that binds the tetrahedral intermediate(s) formed during glutamine hydrolysis. Inhibited by the product CTP, via allosteric rather than competitive inhibition. Catalyzes the ATP-dependent amination of UTP to CTP with either L-glutamine or ammonia as the source of nitrogen. Regulates intracellular CTP levels through interactions with the four ribonucleotide triphosphates. This Mycobacterium leprae (strain Br4923) protein is CTP synthase.